A 98-amino-acid polypeptide reads, in one-letter code: ATP synthase subunit c (98 aa).

A run of 2 helical transmembrane segments spans residues 27 to 47 (ALAL…GLGL) and 73 to 93 (IIGA…FFVV).

Belongs to the ATPase C chain family. In terms of assembly, F-type ATPases have 2 components, F(1) - the catalytic core - and F(0) - the membrane proton channel. F(1) has five subunits: alpha(3), beta(3), gamma(1), delta(1), epsilon(1). F(0) has three main subunits: a(1), b(2) and c(10-14). The alpha and beta chains form an alternating ring which encloses part of the gamma chain. F(1) is attached to F(0) by a central stalk formed by the gamma and epsilon chains, while a peripheral stalk is formed by the delta and b chains.

It localises to the cell inner membrane. In terms of biological role, f(1)F(0) ATP synthase produces ATP from ADP in the presence of a proton or sodium gradient. F-type ATPases consist of two structural domains, F(1) containing the extramembraneous catalytic core and F(0) containing the membrane proton channel, linked together by a central stalk and a peripheral stalk. During catalysis, ATP synthesis in the catalytic domain of F(1) is coupled via a rotary mechanism of the central stalk subunits to proton translocation. Key component of the F(0) channel; it plays a direct role in translocation across the membrane. A homomeric c-ring of between 10-14 subunits forms the central stalk rotor element with the F(1) delta and epsilon subunits. This is ATP synthase subunit c from Protochlamydia amoebophila (strain UWE25).